Reading from the N-terminus, the 255-residue chain is Glycerol-3-phosphate regulon repressor (255 aa).

The HTH deoR-type domain occupies 3–58; sequence QSLRHQKIIKLVEQSGYLSTEELVAALDVSPQTIRRDLNILAELDLIRRHHGGAAS. The H-T-H motif DNA-binding region spans 20–39; that stretch reads LSTEELVAALDVSPQTIRRD.

In terms of biological role, repressor of the glycerol-3-phosphate regulon. In Haemophilus influenzae (strain ATCC 51907 / DSM 11121 / KW20 / Rd), this protein is Glycerol-3-phosphate regulon repressor (glpR).